The following is a 118-amino-acid chain: uncharacterized protein (118 aa).

Residues 98–118 form a disordered region; the sequence is KGKGNEGREEAEEPLEEPEEG. Positions 106-118 are enriched in acidic residues; it reads EEAEEPLEEPEEG.

The protein belongs to the UPF0440 family.

This is an uncharacterized protein from Pyrococcus abyssi (strain GE5 / Orsay).